Here is a 500-residue protein sequence, read N- to C-terminus: Histidine ammonia-lyase (500 aa).

A cross-link (5-imidazolinone (Ala-Gly)) is located at residues 141–143 (ASG). Residue Ser142 is modified to 2,3-didehydroalanine (Ser).

It belongs to the PAL/histidase family. Contains an active site 4-methylidene-imidazol-5-one (MIO), which is formed autocatalytically by cyclization and dehydration of residues Ala-Ser-Gly.

The protein resides in the cytoplasm. The catalysed reaction is L-histidine = trans-urocanate + NH4(+). It functions in the pathway amino-acid degradation; L-histidine degradation into L-glutamate; N-formimidoyl-L-glutamate from L-histidine: step 1/3. This is Histidine ammonia-lyase from Shouchella clausii (strain KSM-K16) (Alkalihalobacillus clausii).